The following is a 637-amino-acid chain: 1-deoxy-D-xylulose-5-phosphate synthase (637 aa).

Thiamine diphosphate-binding positions include His82 and 123 to 125; that span reads GHA. A Mg(2+)-binding site is contributed by Asp154. Residues 155–156, Asn183, Tyr295, and Glu378 contribute to the thiamine diphosphate site; that span reads GS. Asn183 lines the Mg(2+) pocket.

Belongs to the transketolase family. DXPS subfamily. Homodimer. It depends on Mg(2+) as a cofactor. The cofactor is thiamine diphosphate.

The catalysed reaction is D-glyceraldehyde 3-phosphate + pyruvate + H(+) = 1-deoxy-D-xylulose 5-phosphate + CO2. It participates in metabolic intermediate biosynthesis; 1-deoxy-D-xylulose 5-phosphate biosynthesis; 1-deoxy-D-xylulose 5-phosphate from D-glyceraldehyde 3-phosphate and pyruvate: step 1/1. Functionally, catalyzes the acyloin condensation reaction between C atoms 2 and 3 of pyruvate and glyceraldehyde 3-phosphate to yield 1-deoxy-D-xylulose-5-phosphate (DXP). This chain is 1-deoxy-D-xylulose-5-phosphate synthase, found in Lawsonia intracellularis (strain PHE/MN1-00).